A 39-amino-acid polypeptide reads, in one-letter code: Protein MchX (39 aa).

Residues 15–37 (SALSSTLLLSLIMSATLLEYSLS) traverse the membrane as a helical segment.

It localises to the cell inner membrane. Functionally, required for microcin H47 production. Possibly involved in a regulatory loop modulating its own expression and that of MchI and MchB. The chain is Protein MchX (mchX) from Escherichia coli.